A 401-amino-acid chain; its full sequence is Phosphoglycerate kinase (401 aa).

Substrate-binding positions include 23–25 (DLN), Arg38, 61–64 (HFGR), Arg120, and Arg153. ATP contacts are provided by residues Lys203, Glu325, and 355-358 (GGDT).

Belongs to the phosphoglycerate kinase family. In terms of assembly, monomer.

It localises to the cytoplasm. The enzyme catalyses (2R)-3-phosphoglycerate + ATP = (2R)-3-phospho-glyceroyl phosphate + ADP. Its pathway is carbohydrate degradation; glycolysis; pyruvate from D-glyceraldehyde 3-phosphate: step 2/5. This chain is Phosphoglycerate kinase, found in Rhizobium johnstonii (strain DSM 114642 / LMG 32736 / 3841) (Rhizobium leguminosarum bv. viciae).